Consider the following 238-residue polypeptide: Ribonuclease PH (238 aa).

Residues Arg-86 and 124 to 126 (GTR) contribute to the phosphate site.

The protein belongs to the RNase PH family. Homohexameric ring arranged as a trimer of dimers.

It catalyses the reaction tRNA(n+1) + phosphate = tRNA(n) + a ribonucleoside 5'-diphosphate. In terms of biological role, phosphorolytic 3'-5' exoribonuclease that plays an important role in tRNA 3'-end maturation. Removes nucleotide residues following the 3'-CCA terminus of tRNAs; can also add nucleotides to the ends of RNA molecules by using nucleoside diphosphates as substrates, but this may not be physiologically important. Probably plays a role in initiation of 16S rRNA degradation (leading to ribosome degradation) during starvation. This Chromobacterium violaceum (strain ATCC 12472 / DSM 30191 / JCM 1249 / CCUG 213 / NBRC 12614 / NCIMB 9131 / NCTC 9757 / MK) protein is Ribonuclease PH.